Here is a 256-residue protein sequence, read N- to C-terminus: Ubiquinone/menaquinone biosynthesis C-methyltransferase UbiE (256 aa).

S-adenosyl-L-methionine is bound by residues Thr-79, Asp-100, and 128 to 129 (DA).

The protein belongs to the class I-like SAM-binding methyltransferase superfamily. MenG/UbiE family.

It carries out the reaction a 2-demethylmenaquinol + S-adenosyl-L-methionine = a menaquinol + S-adenosyl-L-homocysteine + H(+). The catalysed reaction is a 2-methoxy-6-(all-trans-polyprenyl)benzene-1,4-diol + S-adenosyl-L-methionine = a 5-methoxy-2-methyl-3-(all-trans-polyprenyl)benzene-1,4-diol + S-adenosyl-L-homocysteine + H(+). Its pathway is quinol/quinone metabolism; menaquinone biosynthesis; menaquinol from 1,4-dihydroxy-2-naphthoate: step 2/2. The protein operates within cofactor biosynthesis; ubiquinone biosynthesis. Its function is as follows. Methyltransferase required for the conversion of demethylmenaquinol (DMKH2) to menaquinol (MKH2) and the conversion of 2-polyprenyl-6-methoxy-1,4-benzoquinol (DDMQH2) to 2-polyprenyl-3-methyl-6-methoxy-1,4-benzoquinol (DMQH2). The chain is Ubiquinone/menaquinone biosynthesis C-methyltransferase UbiE from Ectopseudomonas mendocina (strain ymp) (Pseudomonas mendocina).